Reading from the N-terminus, the 724-residue chain is Probable serine/threonine-protein kinase KKQ8 (724 aa).

2 disordered regions span residues Met1–Ser81 and His93–Leu188. Ser19 is subject to Phosphoserine. A compositionally biased stretch (low complexity) spans Pro45–Lys54. A compositionally biased stretch (polar residues) spans Phe95–Pro106. The segment covering Arg143–Ser162 has biased composition (low complexity). 3 positions are modified to phosphoserine: Ser232, Ser238, and Ser241. The tract at residues Ser329–Asp355 is disordered. The span at Gly338–Gln351 shows a compositional bias: polar residues. Positions Gly412–Met712 constitute a Protein kinase domain. ATP-binding positions include Val418 to Val426 and Lys455. Residue Asp563 is the Proton acceptor of the active site.

Belongs to the protein kinase superfamily. CAMK Ser/Thr protein kinase family. NPR/HAL subfamily. HAL5 sub-subfamily.

It is found in the cytoplasm. It catalyses the reaction L-seryl-[protein] + ATP = O-phospho-L-seryl-[protein] + ADP + H(+). The enzyme catalyses L-threonyl-[protein] + ATP = O-phospho-L-threonyl-[protein] + ADP + H(+). The polypeptide is Probable serine/threonine-protein kinase KKQ8 (KKQ8) (Saccharomyces cerevisiae (strain ATCC 204508 / S288c) (Baker's yeast)).